The sequence spans 224 residues: 2-C-methyl-D-erythritol 4-phosphate cytidylyltransferase (224 aa).

The protein belongs to the IspD/TarI cytidylyltransferase family. IspD subfamily.

The enzyme catalyses 2-C-methyl-D-erythritol 4-phosphate + CTP + H(+) = 4-CDP-2-C-methyl-D-erythritol + diphosphate. It functions in the pathway isoprenoid biosynthesis; isopentenyl diphosphate biosynthesis via DXP pathway; isopentenyl diphosphate from 1-deoxy-D-xylulose 5-phosphate: step 2/6. Its function is as follows. Catalyzes the formation of 4-diphosphocytidyl-2-C-methyl-D-erythritol from CTP and 2-C-methyl-D-erythritol 4-phosphate (MEP). The chain is 2-C-methyl-D-erythritol 4-phosphate cytidylyltransferase from Clostridium botulinum (strain Eklund 17B / Type B).